The sequence spans 39 residues: Potassium channel toxin alpha-KTx 2.5 (39 aa).

3 disulfide bridges follow: Cys-7–Cys-29, Cys-13–Cys-34, and Cys-17–Cys-36.

This sequence belongs to the short scorpion toxin superfamily. Potassium channel inhibitor family. Alpha-KTx 02 subfamily. Expressed by the venom gland.

The protein localises to the secreted. Functionally, potent selective inhibitor of Kv1.1/KCNA1, Kv1.2/KCNA2, Kv1.3/KCNA3 voltage-gated potassium channels. Weak inhibitor of Kv1.6/KCNA6 potassium channel. It also shows a weak interaction with nicotinic acetylcholine receptors (nAChR), suggesting it may weakly inhibit it. The protein is Potassium channel toxin alpha-KTx 2.5 of Centruroides limbatus (Bark scorpion).